The chain runs to 611 residues: Protein decapping 5 (611 aa).

The region spanning 9–92 is the Sm domain; the sequence is KSSSAADSYV…IKDLQVKASP (84 aa). Disordered regions lie at residues 111–153, 183–238, 264–301, 318–362, 396–455, and 519–611; these read HYPS…AMPL, GLPQ…PSSL, SSSLQSTLQSAPSPSLASEMAPPLLSNKAPITAPPTLP, EAST…DKPK, QVSS…AGRS, and FFDS…NRTT. 2 stretches are compositionally biased toward polar residues: residues 117–140 and 203–214; these read PTSGSLPSTASGSLPDISSHNGQP and NSLQQPLQYPNF. Residues 264-281 are compositionally biased toward low complexity; sequence SSSLQSTLQSAPSPSLAS. Composition is skewed to polar residues over residues 318 to 330, 396 to 413, and 424 to 437; these read EASTGLPLSNKPS, QVSSSAGLEQSVPVTSEA, and ARPTQKPNGHSFPN. The segment covering 441 to 453 has biased composition (basic residues); that stretch reads YRGRGRGRGRGAG. Residues 453–489 form the DFDF domain; that stretch reads GRSHQVMKFTEDFDFTAMNEKFNKDEVWGHLGKSTTL. The short motif at 512–527 is the FFD box element; the sequence is PVYNKDDFFDSLSSNT. Positions 528-547 are enriched in basic and acidic residues; sequence IDRESQNSRPRFSEQRKLDT. The TFG box motif lies at 534–554; it reads NSRPRFSEQRKLDTETFGEFS. The span at 559 to 604 shows a compositional bias: gly residues; sequence GRGGRGGYGRNNGYSRGGYGGRGYGGYGGRGGGGGGYGYGGRGQGR.

It belongs to the LSM14 family. In terms of assembly, homodimer. Component of the decapping complex. Interacts with DCP1 and DCP2.

It is found in the cytoplasm. The protein localises to the P-body. Its function is as follows. As a component of the decapping complex, involved in the degradation of mRNAs. Promotes P-body formation. Translational repressor. The chain is Protein decapping 5 (DCP5) from Arabidopsis thaliana (Mouse-ear cress).